A 1111-amino-acid polypeptide reads, in one-letter code: Histone deacetylase 5 (1111 aa).

Lys35 participates in a covalent cross-link: Glycyl lysine isopeptide (Lys-Gly) (interchain with G-Cter in SUMO2). Disordered stretches follow at residues 40–63 (GAMP…RGAL), 107–136 (RQHE…EQQR), and 187–272 (KEPT…SSPL). The segment covering 238-249 (DSRDDFPLRKTA) has biased composition (basic and acidic residues). Ser250 bears the Phosphoserine; by AMPK, CaMK1, SIK1 and PKD/PRKD1 mark. The segment covering 263 to 272 (KVAERRSSPL) has biased composition (basic and acidic residues). Phosphothreonine; by PKC is present on Thr283. Residues 474–495 (TVGKLPRHRPLSRTQSSPLPQS) are disordered. Positions 485 to 495 (SRTQSSPLPQS) are enriched in low complexity. Residue Ser489 is modified to Phosphoserine; by AMPK, CaMK1, SIK1 and PKD/PRKD1. At Lys524 the chain carries N6-acetyllysine. Disordered stretches follow at residues 527–611 (TKTG…LEES) and 645–666 (LGRT…DQPT). The segment covering 572–610 (STQEDLEEEEDEEEEDEDCIQVKDEEGESGPDEGPDLEE) has biased composition (acidic residues). Phosphoserine occurs at positions 600 and 650. Residues 671–1017 (TTGVVYDTFM…VSALLSVELQ (347 aa)) are histone deacetylase. The Zn(2+) site is built by Cys685, Cys687, His693, and Cys770. His822 is an active-site residue. A Nuclear export signal motif is present at residues 1070–1109 (EEAETVSAMALLSVGAEQAQAVATQEHSPRPAEEPMEQEP). The segment at 1086-1111 (EQAQAVATQEHSPRPAEEPMEQEPTL) is disordered. A Phosphoserine modification is found at Ser1097.

Belongs to the histone deacetylase family. HD type 2 subfamily. As to quaternary structure, interacts with AHRR, BAHD1, BCOR, HDAC7, HDAC9, CTBP1, MEF2C, NCOR2, NRIP1, PHB2 and a 14-3-3 chaperone protein. Interacts with BCL6, DDIT3/CHOP, GRK5, KDM5B and MYOCD. Interacts with EP300 in the presence of TFAP2C. Interacts with ANKRA2. Interacts with CUL7 (as part of the 3M complex); negatively regulated by ANKRA2. Interacts with ZBTB7B; the interaction allows the recruitment of HDAC4 on CD8 loci for deacetylation and possible inhibition of CD8 genes expression. Interacts with RARA. Post-translationally, phosphorylated by AMPK, CaMK1, SIK1 and PRKD1 at Ser-250 and Ser-489. The phosphorylation is required for the export to the cytoplasm and inhibition. Phosphorylated by the PKC kinases PKN1 and PKN2, impairing nuclear import. Phosphorylated by GRK5, leading to nuclear export of HDAC5 and allowing MEF2-mediated transcription. In terms of processing, ubiquitinated. Polyubiquitination however does not lead to its degradation.

The protein localises to the nucleus. The protein resides in the cytoplasm. It carries out the reaction N(6)-acetyl-L-lysyl-[histone] + H2O = L-lysyl-[histone] + acetate. Functionally, responsible for the deacetylation of lysine residues on the N-terminal part of the core histones (H2A, H2B, H3 and H4). Histone deacetylation gives a tag for epigenetic repression and plays an important role in transcriptional regulation, cell cycle progression and developmental events. Histone deacetylases act via the formation of large multiprotein complexes. Involved in muscle maturation by repressing transcription of myocyte enhancer MEF2C. During muscle differentiation, it shuttles into the cytoplasm, allowing the expression of myocyte enhancer factors. Serves as a corepressor of RARA and causes its deacetylation. In association with RARA, plays a role in the repression of microRNA-10a and thereby in the inflammatory response. The chain is Histone deacetylase 5 (HDAC5) from Cricetulus griseus (Chinese hamster).